The primary structure comprises 177 residues: Large ribosomal subunit protein uL6 (177 aa).

Belongs to the universal ribosomal protein uL6 family. Part of the 50S ribosomal subunit.

In terms of biological role, this protein binds to the 23S rRNA, and is important in its secondary structure. It is located near the subunit interface in the base of the L7/L12 stalk, and near the tRNA binding site of the peptidyltransferase center. The sequence is that of Large ribosomal subunit protein uL6 from Natronomonas pharaonis (strain ATCC 35678 / DSM 2160 / CIP 103997 / JCM 8858 / NBRC 14720 / NCIMB 2260 / Gabara) (Halobacterium pharaonis).